We begin with the raw amino-acid sequence, 352 residues long: MTELELLGPRASGQPLGTAILKAVAEDFQVDEVLDIPLSGQGEHLWLWVEKRDLNTEEAARRLARAAGVPVRSISYAGLKDRQALTRQWFSLHLPGKADPDLSRAEDATLRVLKQVRHQRKLQRGAHSANGFTLRLTALAADHAALDARLQTLKQQGVPNYFGGQRFGHGGGNVQDAQHWAARKALPEQRNVRSRLLSAARSYLFNQVLAARVADGSWQRAQVGDLLAFTDSRSFFSAGEQECSDPRLAILDLHPTGPMWGEGPSPAAGAALTLETAIGQQHALLCQWLANAGMSHERRILRLPIGGLTWHYPEPDILQLEFVLPAGCFATVVVRELVDLVPAGQTDSPCVF.

The active-site Nucleophile is the Asp81. The TRUD domain maps to 157–303 (GVPNYFGGQR…MSHERRILRL (147 aa)).

It belongs to the pseudouridine synthase TruD family.

The enzyme catalyses uridine(13) in tRNA = pseudouridine(13) in tRNA. Responsible for synthesis of pseudouridine from uracil-13 in transfer RNAs. The sequence is that of tRNA pseudouridine synthase D from Pseudomonas putida (strain W619).